We begin with the raw amino-acid sequence, 144 residues long: Prefoldin subunit alpha (144 aa).

Belongs to the prefoldin subunit alpha family. Heterohexamer of two alpha and four beta subunits.

The protein localises to the cytoplasm. Molecular chaperone capable of stabilizing a range of proteins. Seems to fulfill an ATP-independent, HSP70-like function in archaeal de novo protein folding. The protein is Prefoldin subunit alpha of Methanosarcina barkeri (strain Fusaro / DSM 804).